Here is a 335-residue protein sequence, read N- to C-terminus: Ketol-acid reductoisomerase (NADP(+)) (335 aa).

Residues 1–182 form the KARI N-terminal Rossmann domain; sequence MATIIYDNET…GATRAGVYET (182 aa). NADP(+)-binding positions include 25 to 28, arginine 48, serine 51, serine 53, and 83 to 86; these read YGSQ and DEKQ. Histidine 108 is a catalytic residue. Glycine 134 is a binding site for NADP(+). The KARI C-terminal knotted domain maps to 183–328; sequence TFREETETDL…KEIRANIPWL (146 aa). Residues aspartate 191, glutamate 195, glutamate 227, and glutamate 231 each coordinate Mg(2+). Serine 252 contacts substrate.

The protein belongs to the ketol-acid reductoisomerase family. The cofactor is Mg(2+).

The catalysed reaction is (2R)-2,3-dihydroxy-3-methylbutanoate + NADP(+) = (2S)-2-acetolactate + NADPH + H(+). The enzyme catalyses (2R,3R)-2,3-dihydroxy-3-methylpentanoate + NADP(+) = (S)-2-ethyl-2-hydroxy-3-oxobutanoate + NADPH + H(+). Its pathway is amino-acid biosynthesis; L-isoleucine biosynthesis; L-isoleucine from 2-oxobutanoate: step 2/4. The protein operates within amino-acid biosynthesis; L-valine biosynthesis; L-valine from pyruvate: step 2/4. In terms of biological role, involved in the biosynthesis of branched-chain amino acids (BCAA). Catalyzes an alkyl-migration followed by a ketol-acid reduction of (S)-2-acetolactate (S2AL) to yield (R)-2,3-dihydroxy-isovalerate. In the isomerase reaction, S2AL is rearranged via a Mg-dependent methyl migration to produce 3-hydroxy-3-methyl-2-ketobutyrate (HMKB). In the reductase reaction, this 2-ketoacid undergoes a metal-dependent reduction by NADPH to yield (R)-2,3-dihydroxy-isovalerate. The polypeptide is Ketol-acid reductoisomerase (NADP(+)) (Methanosarcina acetivorans (strain ATCC 35395 / DSM 2834 / JCM 12185 / C2A)).